The following is a 206-amino-acid chain: Large ribosomal subunit protein uL4 (206 aa).

Residues 43–78 (ARSGNRKQKDREEVKHTTKKPWRQKGTGRARAGMSS) are disordered. The span at 49 to 58 (KQKDREEVKH) shows a compositional bias: basic and acidic residues. Over residues 59–70 (TTKKPWRQKGTG) the composition is skewed to basic residues.

This sequence belongs to the universal ribosomal protein uL4 family. In terms of assembly, part of the 50S ribosomal subunit.

Its function is as follows. One of the primary rRNA binding proteins, this protein initially binds near the 5'-end of the 23S rRNA. It is important during the early stages of 50S assembly. It makes multiple contacts with different domains of the 23S rRNA in the assembled 50S subunit and ribosome. Forms part of the polypeptide exit tunnel. This is Large ribosomal subunit protein uL4 from Ralstonia pickettii (strain 12J).